The primary structure comprises 257 residues: Hydroxyacylglutathione hydrolase (257 aa).

7 residues coordinate Zn(2+): histidine 54, histidine 56, aspartate 58, histidine 59, histidine 110, aspartate 131, and histidine 169.

Belongs to the metallo-beta-lactamase superfamily. Glyoxalase II family. Monomer. The cofactor is Zn(2+).

The catalysed reaction is an S-(2-hydroxyacyl)glutathione + H2O = a 2-hydroxy carboxylate + glutathione + H(+). Its pathway is secondary metabolite metabolism; methylglyoxal degradation; (R)-lactate from methylglyoxal: step 2/2. Functionally, thiolesterase that catalyzes the hydrolysis of S-D-lactoyl-glutathione to form glutathione and D-lactic acid. The polypeptide is Hydroxyacylglutathione hydrolase (Hahella chejuensis (strain KCTC 2396)).